Consider the following 531-residue polypeptide: MSTPRPEEHQKFSAAAALCPLSNCQFSGVVISAIADEQKLEFTNKYKGSCTLLCSYDSQGIVLRIVLDADREHVLKEYMIAADTDAAQMGRRSYAVTLESDNLVLRFASDQDQQLFRKVVENVKHLRPKSVFSQRTEESSASQYFQFYGYLSQQQNMMQDYVRTSTYQRAILGNAVDFQDKIVLDVGAGSGILSFFAVQAGAAKVYAIEASNMAQYAQQLVESNNVQHKISVIPGKIEEIELPEKVDVIISEPMGYMLYNERMLETYLHARKWLKPNGKMYPTHGDLHIAPFSDESLYSEQYNKANFWYQSAFHGVDLTTLHKEGMKEYFRQPIVDTFDIRICMAKSVRHVCDFLNDKEDDLHLIDIPLEFQILQTGICHGLAFWFDVEFSGSSQNVWLSTSPTAPLTHWYQVRCLLPMPIFIKQGQTLTGRVLLEANRRQSYDVTIDLHIEGTLISSSNTLDLKNPYFRYTGAPVQAPPGTSTQSPSEQYWTQVDTQGSRNSSSMLNGGLGVNGIGDGSMDITHGLMHPH.

The SAM-dependent MTase PRMT-type domain occupies 141-450 (ASQYFQFYGY…QSYDVTIDLH (310 aa)). Residues glutamine 154, arginine 163, glycine 187, glutamate 209, glutamate 238, and threonine 266 each coordinate S-adenosyl-L-methionine. Arginine 501 carries the asymmetric dimethylarginine; by autocatalysis modification.

This sequence belongs to the class I-like SAM-binding methyltransferase superfamily. Protein arginine N-methyltransferase family. As to quaternary structure, homodimer. The dimethylated protein is the major form.

The protein resides in the cytoplasm. The protein localises to the nucleus. It catalyses the reaction L-arginyl-[protein] + 2 S-adenosyl-L-methionine = N(omega),N(omega)-dimethyl-L-arginyl-[protein] + 2 S-adenosyl-L-homocysteine + 2 H(+). Its function is as follows. Methylates (mono- and asymmetric dimethylation) the guanidino nitrogens of arginyl residues in proteins. May methylate histone H3 at 'Arg-17' and activate transcription via chromatin remodeling. The polypeptide is Histone-arginine methyltransferase CARMER (Art4) (Drosophila persimilis (Fruit fly)).